The sequence spans 104 residues: 11 kDa late embryogenesis abundant protein (104 aa).

Positions 1 to 24 are enriched in low complexity; sequence MQSGKNAAASAKETAANVAASAKA. Residues 1-104 form a disordered region; that stretch reads MQSGKNAAAS…TGHRTGTGGI (104 aa). The span at 25-74 shows a compositional bias: basic and acidic residues; sequence GMEKTKASLQEKGEKMTAHDPMQKEMAREKKEERKHEAEYEKQAAKEHNA. Residues 75-89 show a composition bias toward polar residues; the sequence is AQKQTTGIGTGTHSY.

Belongs to the LEA type 1 family. In terms of tissue distribution, maximally expressed in dry seeds. Also present in mid-maturation embryos.

In terms of biological role, LEA proteins are late embryonic proteins abundant in higher plant seed embryos. They may play an essential role in seed survival and in controlling water exchanges during seed desiccation and imbibition. In Helianthus annuus (Common sunflower), this protein is 11 kDa late embryogenesis abundant protein.